We begin with the raw amino-acid sequence, 102 residues long: Large ribosomal subunit protein bL21 (102 aa).

The protein belongs to the bacterial ribosomal protein bL21 family. As to quaternary structure, part of the 50S ribosomal subunit. Contacts protein L20.

Functionally, this protein binds to 23S rRNA in the presence of protein L20. This is Large ribosomal subunit protein bL21 from Photorhabdus laumondii subsp. laumondii (strain DSM 15139 / CIP 105565 / TT01) (Photorhabdus luminescens subsp. laumondii).